The following is a 202-amino-acid chain: N-acetyltransferase 9-like protein (202 aa).

The 151-residue stretch at 34 to 184 folds into the N-acetyltransferase domain; the sequence is EEIRRLTGSE…FTFELPKNRL (151 aa).

It belongs to the acetyltransferase family. GNAT subfamily.

This Caenorhabditis elegans protein is N-acetyltransferase 9-like protein.